The sequence spans 207 residues: MRPLTPRQEEVLQLIKTTMLETGMPPTRAEIARHLGFKSANAAEEHLKALARKGAIEILPGTSRGIRLTEPLEDQLEDQGLPLIGRVAAGEPILAQEHVEMHYKVDPSLFKPSADFLLRVSGMSMKDIGILDGDLLAVHKTTDVHNGQVVVARVDEDVTVKRLERKGRQVVLHAENEDFQPIKVDLATQPFNIEGIAVGVIRNADWM.

Positions 28-48 (RAEIARHLGFKSANAAEEHLK) form a DNA-binding region, H-T-H motif. Active-site for autocatalytic cleavage activity residues include Ser124 and Lys161.

This sequence belongs to the peptidase S24 family. In terms of assembly, homodimer.

It carries out the reaction Hydrolysis of Ala-|-Gly bond in repressor LexA.. Represses a number of genes involved in the response to DNA damage (SOS response), including recA and lexA. In the presence of single-stranded DNA, RecA interacts with LexA causing an autocatalytic cleavage which disrupts the DNA-binding part of LexA, leading to derepression of the SOS regulon and eventually DNA repair. This is LexA repressor from Pseudoalteromonas atlantica (strain T6c / ATCC BAA-1087).